We begin with the raw amino-acid sequence, 109 residues long: Thioredoxin (109 aa).

The 108-residue stretch at 2–109 folds into the Thioredoxin domain; it reads ETLLWKDARE…LVEKIKELFK (108 aa). Cys27 and Cys30 are disulfide-bonded.

It belongs to the thioredoxin family.

Participates in various redox reactions through the reversible oxidation of its active center dithiol to a disulfide and catalyzes dithiol-disulfide exchange reactions. In Mycoplasmopsis pulmonis (strain UAB CTIP) (Mycoplasma pulmonis), this protein is Thioredoxin (trxA).